Reading from the N-terminus, the 680-residue chain is UvrABC system protein B (680 aa).

Positions 27–192 constitute a Helicase ATP-binding domain; the sequence is SNIEAGVTDQ…ERNDYDFHRG (166 aa). 40-47 contributes to the ATP binding site; it reads GVTGSGKT. The short motif at 93–116 is the Beta-hairpin element; that stretch reads YYDYYQPEAYVPSSDTYIEKDSSI. One can recognise a Helicase C-terminal domain in the interval 432–594; that stretch reads QVDDLLGECR…IVPATIRKAV (163 aa). One can recognise a UVR domain in the interval 637–672; that stretch reads AKQIQQLERDMREAAKELEFERAAELRDRIRLLREH.

This sequence belongs to the UvrB family. Forms a heterotetramer with UvrA during the search for lesions. Interacts with UvrC in an incision complex.

It is found in the cytoplasm. Functionally, the UvrABC repair system catalyzes the recognition and processing of DNA lesions. A damage recognition complex composed of 2 UvrA and 2 UvrB subunits scans DNA for abnormalities. Upon binding of the UvrA(2)B(2) complex to a putative damaged site, the DNA wraps around one UvrB monomer. DNA wrap is dependent on ATP binding by UvrB and probably causes local melting of the DNA helix, facilitating insertion of UvrB beta-hairpin between the DNA strands. Then UvrB probes one DNA strand for the presence of a lesion. If a lesion is found the UvrA subunits dissociate and the UvrB-DNA preincision complex is formed. This complex is subsequently bound by UvrC and the second UvrB is released. If no lesion is found, the DNA wraps around the other UvrB subunit that will check the other stand for damage. The chain is UvrABC system protein B from Nitratidesulfovibrio vulgaris (strain DSM 19637 / Miyazaki F) (Desulfovibrio vulgaris).